We begin with the raw amino-acid sequence, 96 residues long: Small ribosomal subunit protein bS6 (96 aa).

It belongs to the bacterial ribosomal protein bS6 family.

In terms of biological role, binds together with bS18 to 16S ribosomal RNA. This Streptomyces griseus subsp. griseus (strain JCM 4626 / CBS 651.72 / NBRC 13350 / KCC S-0626 / ISP 5235) protein is Small ribosomal subunit protein bS6.